We begin with the raw amino-acid sequence, 240 residues long: Keratinocyte-associated protein 3 (240 aa).

A run of 4 helical transmembrane segments spans residues 21–41, 63–83, 95–115, and 163–183; these read VGLA…VLHG, VISV…LLAS, LLAL…GLLL, and ALAL…LSGY.

Belongs to the TMEM54 family.

The protein resides in the membrane. In Bos taurus (Bovine), this protein is Keratinocyte-associated protein 3 (KRTCAP3).